Reading from the N-terminus, the 1162-residue chain is Leptin receptor (1162 aa).

Positions methionine 1–alanine 21 are cleaved as a signal peptide. The Extracellular segment spans residues leucine 22–glycine 839. Cystine bridges form between cysteine 37–cysteine 90, cysteine 89–cysteine 99, cysteine 131–cysteine 142, cysteine 186–cysteine 195, and cysteine 188–cysteine 193. Asparagine 41, asparagine 56, asparagine 73, and asparagine 98 each carry an N-linked (GlcNAc...) asparagine glycan. N-linked (GlcNAc...) asparagine glycosylation occurs at asparagine 187. The 94-residue stretch at proline 238–valine 331 folds into the Fibronectin type-III 1 domain. 2 N-linked (GlcNAc...) asparagine glycosylation sites follow: asparagine 275 and asparagine 345. In terms of domain architecture, Ig-like spans glutamine 329–aspartate 427. Cystine bridges form between cysteine 350-cysteine 410 and cysteine 411-cysteine 416. Residue asparagine 431 is glycosylated (N-linked (GlcNAc...) asparagine). 3 disulfide bridges follow: cysteine 434/cysteine 445, cysteine 471/cysteine 526, and cysteine 486/cysteine 496. Positions histidine 465–glutamate 482 are leptin-binding. Asparagine 514, asparagine 622, asparagine 657, asparagine 668, asparagine 686, asparagine 695, asparagine 698, and asparagine 726 each carry an N-linked (GlcNAc...) asparagine glycan. Fibronectin type-III domains lie at proline 537–methionine 632, proline 637–phenylalanine 729, and alanine 738–aspartate 832. The short motif at tryptophan 620–serine 624 is the WSXWS motif element. Residues leucine 840–isoleucine 860 form a helical membrane-spanning segment. At serine 861–valine 1162 the chain is on the cytoplasmic side. A Box 1 motif motif is present at residues phenylalanine 869–lysine 877. Phosphoserine is present on serine 880. The segment at glutamate 891 to leucine 896 is required for JAK2 activation. The interval leucine 896 to valine 904 is required for STAT3 phosphorylation. A Phosphotyrosine; by JAK2 modification is found at tyrosine 985. Tyrosine 1077 carries the phosphotyrosine modification. Tyrosine 1138 carries the phosphotyrosine; by JAK2 modification.

This sequence belongs to the type I cytokine receptor family. Type 2 subfamily. As to quaternary structure, present as a mixture of monomers and dimers. The phosphorylated receptor binds a number of SH2 domain-containing proteins such as JAK2, STAT3, PTPN11, and SOCS3. Interaction with SOCS3 inhibits JAK/STAT signaling and MAPK cascade. On ligand binding, phosphorylated on two conserved C-terminal tyrosine residues (isoform B only) by JAK2. Tyr-985 is required for complete binding and activation of PTPN11, ERK/FOS activation,for interaction with SOCS3 and SOCS3 mediated inhibition of leptin signaling. Phosphorylation on Tyr-1138 is required for STAT3 binding/activation. Phosphorylation of Tyr-1077 has a more accessory role. As to expression, isoform A: highest level of expression in lung and kidney, also present in heart, brain, spleen, liver, muscle, choroid plexus and hypothalamus. Isoform B: highest levels of expression in hypothalamus and lower levels in brain, testes and adipose tissue. Expressed by neurons of the parabrachial nucleus. Expressed by peripheral blood mononuclear cells and CD4(+) T-cells. Isoform E: expressed in adipose tissue, liver, hypothalamus, cerebral microvessels, heart, and testes.

The protein localises to the cell membrane. It is found in the basolateral cell membrane. It localises to the secreted. Receptor for hormone LEP/leptin. On ligand binding, mediates LEP central and peripheral effects through the activation of different signaling pathways such as JAK2/STAT3 and MAPK cascade/FOS. In the hypothalamus, LEP acts as an appetite-regulating factor that induces a decrease in food intake and an increase in energy consumption by inducing anorexinogenic factors and suppressing orexigenic neuropeptides, also regulates bone mass and secretion of hypothalamo-pituitary-adrenal hormones. In the periphery, increases basal metabolism, influences reproductive function, regulates pancreatic beta-cell function and insulin secretion, is pro-angiogenic and affects innate and adaptive immunity. Control of energy homeostasis and melanocortin production (stimulation of POMC and full repression of AgRP transcription) is mediated by STAT3 signaling, whereas distinct signals regulate NPY and the control of fertility, growth and glucose homeostasis. Involved in the regulation of counter-regulatory response to hypoglycemia by inhibiting neurons of the parabrachial nucleus. Has a specific effect on T lymphocyte responses, differentially regulating the proliferation of naive and memory T-cells. Leptin increases Th1 and suppresses Th2 cytokine production. Its function is as follows. May transport LEP across the blood-brain barrier. Binds LEP and mediates LEP endocytosis. Does not induce phosphorylation of and activate STAT3. In terms of biological role, antagonizes Isoform A and isoform B-mediated LEP binding and endocytosis. This is Leptin receptor (Lepr) from Mus musculus (Mouse).